Consider the following 502-residue polypeptide: Glycerol kinase (502 aa).

Position 14 (Thr-14) interacts with ADP. ATP is bound by residues Thr-14, Thr-15, and Ser-16. Sn-glycerol 3-phosphate is bound at residue Thr-14. Residue Arg-18 coordinates ADP. 4 residues coordinate sn-glycerol 3-phosphate: Arg-84, Glu-85, Tyr-136, and Asp-246. 5 residues coordinate glycerol: Arg-84, Glu-85, Tyr-136, Asp-246, and Gln-247. The ADP site is built by Thr-268 and Gly-311. ATP is bound by residues Thr-268, Gly-311, Gln-315, and Gly-412. 2 residues coordinate ADP: Gly-412 and Asn-416.

The protein belongs to the FGGY kinase family. Homotetramer and homodimer (in equilibrium). Heterodimer with EIIA-Glc. Binds 1 zinc ion per glycerol kinase EIIA-Glc dimer. The zinc ion is important for dimerization.

It carries out the reaction glycerol + ATP = sn-glycerol 3-phosphate + ADP + H(+). Its pathway is polyol metabolism; glycerol degradation via glycerol kinase pathway; sn-glycerol 3-phosphate from glycerol: step 1/1. With respect to regulation, activity of this regulatory enzyme is affected by several metabolites. Allosterically and non-competitively inhibited by fructose 1,6-bisphosphate (FBP) and unphosphorylated phosphocarrier protein EIIA-Glc (III-Glc), an integral component of the bacterial phosphotransferase (PTS) system. Functionally, key enzyme in the regulation of glycerol uptake and metabolism. Catalyzes the phosphorylation of glycerol to yield sn-glycerol 3-phosphate. This Salmonella typhimurium (strain LT2 / SGSC1412 / ATCC 700720) protein is Glycerol kinase.